The sequence spans 134 residues: ATP synthase epsilon chain, chloroplastic (134 aa).

The protein belongs to the ATPase epsilon chain family. F-type ATPases have 2 components, CF(1) - the catalytic core - and CF(0) - the membrane proton channel. CF(1) has five subunits: alpha(3), beta(3), gamma(1), delta(1), epsilon(1). CF(0) has three main subunits: a, b and c.

Its subcellular location is the plastid. It is found in the chloroplast thylakoid membrane. Its function is as follows. Produces ATP from ADP in the presence of a proton gradient across the membrane. This is ATP synthase epsilon chain, chloroplastic from Phalaenopsis aphrodite subsp. formosana (Moth orchid).